The sequence spans 283 residues: Protein FAM78A (283 aa).

The protein belongs to the FAM78 family.

This is Protein FAM78A (Fam78a) from Mus musculus (Mouse).